We begin with the raw amino-acid sequence, 207 residues long: DNA protection during starvation protein 1 (207 aa).

Residues 1-12 show a composition bias toward basic and acidic residues; sequence MTKKSTKSEAAS. Residues 1–31 form a disordered region; sequence MTKKSTKSEAASKTKKSGVPETGAQGVRAGG. Fe cation contacts are provided by His83, Asp110, and Glu114.

The protein belongs to the Dps family. As to quaternary structure, the 12 subunits form a hollow sphere into which the mineral iron core of up to 500 Fe(3+) can be deposited. The homododecameric forms at higher concentration of salt, the homodimeric form under reducing, low-salt conditions. The assembly of the dodecamer is irreversible.

The protein localises to the cytoplasm. Its subcellular location is the nucleoid. The enzyme catalyses 2 Fe(2+) + H2O2 + 2 H(+) = 2 Fe(3+) + 2 H2O. Protects DNA from oxidative damage by sequestering intracellular Fe(2+) ion and storing it in the form of Fe(3+) oxyhydroxide mineral. One hydrogen peroxide oxidizes two Fe(2+) ions, which prevents hydroxyl radical production by the Fenton reaction. Both oligomeric forms of dps exhibit ferroxidase activity and DNA binding. Dodecameric dps is capable of Fe(2+) oxidation/mineralization. Only dimeric dps affords efficient DNA protection against hydroxyl radical-mediated cleavage. In Deinococcus radiodurans (strain ATCC 13939 / DSM 20539 / JCM 16871 / CCUG 27074 / LMG 4051 / NBRC 15346 / NCIMB 9279 / VKM B-1422 / R1), this protein is DNA protection during starvation protein 1 (dps1).